Consider the following 502-residue polypeptide: Probable cytochrome P450 554A1 (502 aa).

Residues 3–20 (LLLFIFFLILFYYSVKYY) form a helical membrane-spanning segment. Residue cysteine 448 participates in heme binding.

Belongs to the cytochrome P450 family. Requires heme as cofactor.

The protein resides in the membrane. The protein is Probable cytochrome P450 554A1 (cyp554A1) of Dictyostelium discoideum (Social amoeba).